A 167-amino-acid chain; its full sequence is Male-specific protein scotti (167 aa).

Residues asparagine 30, asparagine 124, and asparagine 148 are each glycosylated (N-linked (GlcNAc...) asparagine).

Belongs to the male-specific scotti family.

Its function is as follows. Post-meiotically transcribed gene that has a role in late spermiogenesis; required for actin cone progression during spermatid individualization. In Drosophila ananassae (Fruit fly), this protein is Male-specific protein scotti.